Consider the following 632-residue polypeptide: ATP-dependent zinc metalloprotease FtsH (632 aa).

Residues Met-1–Lys-9 lie on the Cytoplasmic side of the membrane. A helical transmembrane segment spans residues Pro-10–Leu-30. Over Arg-31–Asn-116 the chain is Periplasmic. A helical membrane pass occupies residues Phe-117–Phe-137. Residues Met-138–Ser-632 are Cytoplasmic-facing. ATP contacts are provided by residues Ala-173, Gly-213 to Thr-217, and His-354. Zn(2+) is bound at residue His-434. The active site involves Glu-435. Residues His-438 and Asp-511 each coordinate Zn(2+).

It in the central section; belongs to the AAA ATPase family. In the C-terminal section; belongs to the peptidase M41 family. Homohexamer. The cofactor is Zn(2+).

The protein resides in the cell inner membrane. Its function is as follows. Acts as a processive, ATP-dependent zinc metallopeptidase for both cytoplasmic and membrane proteins. Plays a role in the quality control of integral membrane proteins. The chain is ATP-dependent zinc metalloprotease FtsH from Helicobacter pylori (strain ATCC 700392 / 26695) (Campylobacter pylori).